The following is a 220-amino-acid chain: Thiamine-phosphate synthase (220 aa).

4-amino-2-methyl-5-(diphosphooxymethyl)pyrimidine contacts are provided by residues 46–50 and asparagine 83; that span reads QFREK. Mg(2+) is bound by residues aspartate 84 and aspartate 103. Serine 122 is a 4-amino-2-methyl-5-(diphosphooxymethyl)pyrimidine binding site. A 2-[(2R,5Z)-2-carboxy-4-methylthiazol-5(2H)-ylidene]ethyl phosphate-binding site is contributed by 149-151; the sequence is TNS. A 4-amino-2-methyl-5-(diphosphooxymethyl)pyrimidine-binding site is contributed by lysine 152. 2-[(2R,5Z)-2-carboxy-4-methylthiazol-5(2H)-ylidene]ethyl phosphate contacts are provided by residues glycine 181 and 201 to 202; that span reads IS.

It belongs to the thiamine-phosphate synthase family. The cofactor is Mg(2+).

It catalyses the reaction 2-[(2R,5Z)-2-carboxy-4-methylthiazol-5(2H)-ylidene]ethyl phosphate + 4-amino-2-methyl-5-(diphosphooxymethyl)pyrimidine + 2 H(+) = thiamine phosphate + CO2 + diphosphate. The enzyme catalyses 2-(2-carboxy-4-methylthiazol-5-yl)ethyl phosphate + 4-amino-2-methyl-5-(diphosphooxymethyl)pyrimidine + 2 H(+) = thiamine phosphate + CO2 + diphosphate. The catalysed reaction is 4-methyl-5-(2-phosphooxyethyl)-thiazole + 4-amino-2-methyl-5-(diphosphooxymethyl)pyrimidine + H(+) = thiamine phosphate + diphosphate. The protein operates within cofactor biosynthesis; thiamine diphosphate biosynthesis; thiamine phosphate from 4-amino-2-methyl-5-diphosphomethylpyrimidine and 4-methyl-5-(2-phosphoethyl)-thiazole: step 1/1. Condenses 4-methyl-5-(beta-hydroxyethyl)thiazole monophosphate (THZ-P) and 2-methyl-4-amino-5-hydroxymethyl pyrimidine pyrophosphate (HMP-PP) to form thiamine monophosphate (TMP). The sequence is that of Thiamine-phosphate synthase from Mannheimia succiniciproducens (strain KCTC 0769BP / MBEL55E).